Consider the following 366-residue polypeptide: D-alanine--D-alanine ligase (366 aa).

An ATP-grasp domain is found at 144-347; that stretch reads KRLLKDAGLK…YRELIENLIE (204 aa). 174-229 contacts ATP; that stretch reads KEELGLPMFIKPANQGSSVGVHKVENEEQFYSAIKDAFQFDHKLLVEEAIVGREIE. Positions 301, 314, and 316 each coordinate Mg(2+).

Belongs to the D-alanine--D-alanine ligase family. The cofactor is Mg(2+). Requires Mn(2+) as cofactor.

It localises to the cytoplasm. It catalyses the reaction 2 D-alanine + ATP = D-alanyl-D-alanine + ADP + phosphate + H(+). The protein operates within cell wall biogenesis; peptidoglycan biosynthesis. Functionally, cell wall formation. The chain is D-alanine--D-alanine ligase from Oceanobacillus iheyensis (strain DSM 14371 / CIP 107618 / JCM 11309 / KCTC 3954 / HTE831).